A 506-amino-acid polypeptide reads, in one-letter code: ATP synthase subunit alpha (506 aa).

Position 169–176 (169–176 (GDRQTGKT)) interacts with ATP.

Belongs to the ATPase alpha/beta chains family. As to quaternary structure, F-type ATPases have 2 components, CF(1) - the catalytic core - and CF(0) - the membrane proton channel. CF(1) has five subunits: alpha(3), beta(3), gamma(1), delta(1), epsilon(1). CF(0) has three main subunits: a(1), b(2) and c(9-12). The alpha and beta chains form an alternating ring which encloses part of the gamma chain. CF(1) is attached to CF(0) by a central stalk formed by the gamma and epsilon chains, while a peripheral stalk is formed by the delta and b chains.

It localises to the cell membrane. The enzyme catalyses ATP + H2O + 4 H(+)(in) = ADP + phosphate + 5 H(+)(out). Produces ATP from ADP in the presence of a proton gradient across the membrane. The alpha chain is a regulatory subunit. This is ATP synthase subunit alpha from Acetivibrio thermocellus (strain ATCC 27405 / DSM 1237 / JCM 9322 / NBRC 103400 / NCIMB 10682 / NRRL B-4536 / VPI 7372) (Clostridium thermocellum).